The following is a 244-amino-acid chain: tRNA (guanine-N(1)-)-methyltransferase (244 aa).

Residues Gly113 and 133–138 contribute to the S-adenosyl-L-methionine site; that span reads IGDYVL.

It belongs to the RNA methyltransferase TrmD family. In terms of assembly, homodimer.

It is found in the cytoplasm. It catalyses the reaction guanosine(37) in tRNA + S-adenosyl-L-methionine = N(1)-methylguanosine(37) in tRNA + S-adenosyl-L-homocysteine + H(+). Its function is as follows. Specifically methylates guanosine-37 in various tRNAs. The chain is tRNA (guanine-N(1)-)-methyltransferase from Bacillus cereus (strain B4264).